The primary structure comprises 290 residues: Oxaloacetate decarboxylase 2 (290 aa).

Position 50 (serine 50) interacts with substrate. Residue aspartate 88 coordinates Mg(2+). Arginine 159 and histidine 235 together coordinate substrate.

This sequence belongs to the isocitrate lyase/PEP mutase superfamily. Oxaloacetate decarboxylase family. As to quaternary structure, homotetramer; dimer of dimers. It depends on Mg(2+) as a cofactor.

It carries out the reaction oxaloacetate + H(+) = pyruvate + CO2. Catalyzes the decarboxylation of oxaloacetate into pyruvate. Seems to play a role in maintaining cellular concentrations of bicarbonate and pyruvate. The polypeptide is Oxaloacetate decarboxylase 2 (Pseudomonas fluorescens (strain Pf0-1)).